The primary structure comprises 156 residues: ATP synthase subunit b (156 aa).

The helical transmembrane segment at 7-27 (LIGQLIAFALFVAFCMKFVWP) threads the bilayer.

The protein belongs to the ATPase B chain family. F-type ATPases have 2 components, F(1) - the catalytic core - and F(0) - the membrane proton channel. F(1) has five subunits: alpha(3), beta(3), gamma(1), delta(1), epsilon(1). F(0) has three main subunits: a(1), b(2) and c(10-14). The alpha and beta chains form an alternating ring which encloses part of the gamma chain. F(1) is attached to F(0) by a central stalk formed by the gamma and epsilon chains, while a peripheral stalk is formed by the delta and b chains.

Its subcellular location is the cell inner membrane. F(1)F(0) ATP synthase produces ATP from ADP in the presence of a proton or sodium gradient. F-type ATPases consist of two structural domains, F(1) containing the extramembraneous catalytic core and F(0) containing the membrane proton channel, linked together by a central stalk and a peripheral stalk. During catalysis, ATP synthesis in the catalytic domain of F(1) is coupled via a rotary mechanism of the central stalk subunits to proton translocation. Functionally, component of the F(0) channel, it forms part of the peripheral stalk, linking F(1) to F(0). The sequence is that of ATP synthase subunit b from Actinobacillus pleuropneumoniae serotype 5b (strain L20).